A 239-amino-acid chain; its full sequence is Tetraspanin-9 (239 aa).

Residues 1-13 are Cytoplasmic-facing; that stretch reads MARGCLCCLKYMM. The helical transmembrane segment at 14-34 threads the bilayer; it reads FLFNLIFWLCGCGLLGVGIWL. Residues 35–55 are Extracellular-facing; that stretch reads SVSQGNFATFSPSFPSLSAAN. The chain crosses the membrane as a helical span at residues 56 to 76; the sequence is LVIAIGTIVMVTGFLGCLGAI. Residues 77–85 are Cytoplasmic-facing; the sequence is KENRCLLLS. Residues 86–106 form a helical membrane-spanning segment; it reads FFIVLLIILLAELILIILFFV. Residues 107-203 are Extracellular-facing; the sequence is YMDKVNENAR…VKMWFDDNKH (97 aa). Asn180 is a glycosylation site (N-linked (GlcNAc...) asparagine). A helical membrane pass occupies residues 204 to 224; that stretch reads VLGTVGMCILIMQILGMAFSM. Over 225–239 the chain is Cytoplasmic; it reads TLFQHIHRTGKKYDA.

This sequence belongs to the tetraspanin (TM4SF) family. Found in a complex with GP6. Post-translationally, glycosylated.

It is found in the membrane. This Sus scrofa (Pig) protein is Tetraspanin-9 (TSPAN9).